A 276-amino-acid polypeptide reads, in one-letter code: Large ribosomal subunit protein uL2 (276 aa).

Disordered regions lie at residues 36 to 58 (PLHK…GGGH) and 214 to 276 (LGKR…RRKK).

This sequence belongs to the universal ribosomal protein uL2 family. As to quaternary structure, part of the 50S ribosomal subunit. Forms a bridge to the 30S subunit in the 70S ribosome.

Its function is as follows. One of the primary rRNA binding proteins. Required for association of the 30S and 50S subunits to form the 70S ribosome, for tRNA binding and peptide bond formation. It has been suggested to have peptidyltransferase activity; this is somewhat controversial. Makes several contacts with the 16S rRNA in the 70S ribosome. The polypeptide is Large ribosomal subunit protein uL2 (Halalkalibacterium halodurans (strain ATCC BAA-125 / DSM 18197 / FERM 7344 / JCM 9153 / C-125) (Bacillus halodurans)).